A 90-amino-acid polypeptide reads, in one-letter code: DNA-binding protein HRm (90 aa).

It belongs to the bacterial histone-like protein family.

Histone-like DNA-binding protein which is capable of wrapping DNA to stabilize it, and thus to prevent its denaturation under extreme environmental conditions. This is DNA-binding protein HRm (hupB) from Rhizobium meliloti (strain 1021) (Ensifer meliloti).